A 429-amino-acid chain; its full sequence is Probable proton-coupled zinc antiporter SLC30A4 (429 aa).

Residues 1–113 (MAGSGAWKRL…LLKQRKVKTR (113 aa)) are Cytoplasmic-facing. Residues 114 to 134 (LTIAAVLYLLFMIGELVGGYI) traverse the membrane as a helical segment. At 135 to 143 (ANSLAIMTD) the chain is on the lumenal side. The helical transmembrane segment at 144–164 (ALHMLTDLSAIILTLLALWLS) threads the bilayer. Zn(2+)-binding residues include His-146 and Asp-150. At 165-178 (SKSPTKRFTFGFHR) the chain is on the cytoplasmic side. The helical transmembrane segment at 179–199 (LEVLSAMISVLLVYILMGFLL) threads the bilayer. Over 200 to 216 (YEAVQRTIHMKYEINGD) the chain is Lumenal. Residues 217–237 (IMLITAAIGVAVNVIMGFLLN) form a helical membrane-spanning segment. Topologically, residues 238-274 (QSGHHHAHSHSLPSNSPTTGPRCGHNQGQDSLAVRAA) are cytoplasmic. Positions 240–264 (GHHHAHSHSLPSNSPTTGPRCGHNQ) are zinc binding. The chain crosses the membrane as a helical span at residues 275 to 295 (FVHALGDLVQSVGVLIAAYII). Zn(2+) contacts are provided by His-277 and Asp-281. Residues 296 to 310 (RFKPEYRIADPICTY) lie on the Lumenal side of the membrane. Residues 311-331 (VFSLLVAFTTFRIIWDTVVII) form a helical membrane-spanning segment. Residues 332 to 429 (LEGVPSHLNV…TCANCQSSSS (98 aa)) are Cytoplasmic-facing.

It belongs to the cation diffusion facilitator (CDF) transporter (TC 2.A.4) family. SLC30A subfamily. Homodimerization could regulate efficiency for zinc transport. Interacts with TMEM163.

The protein resides in the endosome membrane. It is found in the late endosome membrane. The protein localises to the lysosome membrane. It carries out the reaction Zn(2+)(in) + 2 H(+)(out) = Zn(2+)(out) + 2 H(+)(in). In terms of biological role, probable proton-coupled zinc ion antiporter mediating zinc import from cytoplasm potentially into the endocytic compartment. Controls zinc deposition in milk. The protein is Probable proton-coupled zinc antiporter SLC30A4 of Bos taurus (Bovine).